Consider the following 65-residue polypeptide: Large ribosomal subunit protein bL35 (65 aa).

It belongs to the bacterial ribosomal protein bL35 family.

This Alkalilimnicola ehrlichii (strain ATCC BAA-1101 / DSM 17681 / MLHE-1) protein is Large ribosomal subunit protein bL35.